The following is a 174-amino-acid chain: Adenine phosphoribosyltransferase (174 aa).

Belongs to the purine/pyrimidine phosphoribosyltransferase family. As to quaternary structure, homodimer.

The protein localises to the cytoplasm. It carries out the reaction AMP + diphosphate = 5-phospho-alpha-D-ribose 1-diphosphate + adenine. Its pathway is purine metabolism; AMP biosynthesis via salvage pathway; AMP from adenine: step 1/1. Functionally, catalyzes a salvage reaction resulting in the formation of AMP, that is energically less costly than de novo synthesis. The protein is Adenine phosphoribosyltransferase of Lachnoclostridium phytofermentans (strain ATCC 700394 / DSM 18823 / ISDg) (Clostridium phytofermentans).